The following is a 102-amino-acid chain: Large ribosomal subunit protein bL21 (102 aa).

Belongs to the bacterial ribosomal protein bL21 family. In terms of assembly, part of the 50S ribosomal subunit. Contacts protein L20.

This protein binds to 23S rRNA in the presence of protein L20. The polypeptide is Large ribosomal subunit protein bL21 (Geobacillus thermodenitrificans (strain NG80-2)).